A 287-amino-acid polypeptide reads, in one-letter code: Zinc transporter ZIP9 (287 aa).

The chain crosses the membrane as a helical span at residues 4–24 (FLSISLLSLAMLVGCYVAGII). N-linked (GlcNAc...) asparagine glycosylation is present at N29. The next 5 helical transmembrane spans lie at 35–55 (LKLV…AVIV), 107–127 (AYIG…DQIG), 147–167 (ITTT…LGAA), 177–197 (LIVF…LVSF), and 211–231 (HLLV…LGLS). N-linked (GlcNAc...) asparagine glycosylation is present at N242. Residues 245–265 (GVAMLFSAGTFLYVATVHVLP) traverse the membrane as a helical segment. The segment at 268 to 287 (TSTNQSGSSLSPRPLPSGKN) is disordered. The N-linked (GlcNAc...) asparagine glycan is linked to N271. Low complexity predominate over residues 273 to 287 (SGSSLSPRPLPSGKN).

It belongs to the ZIP transporter (TC 2.A.5) family.

It localises to the golgi apparatus. The protein localises to the trans-Golgi network membrane. Its subcellular location is the cell membrane. The protein resides in the cytoplasm. It is found in the perinuclear region. It localises to the mitochondrion. The protein localises to the nucleus. The enzyme catalyses Zn(2+)(in) = Zn(2+)(out). Transports zinc ions across cell and organelle membranes into the cytoplasm and regulates intracellular zinc homeostasis. Participates in the zinc ions efflux out of the secretory compartments. Regulates intracellular zinc level, resulting in the enhancement of AKT1 and MAPK3/MAPK1 (Erk1/2) phosphorylation in response to the BCR activation. Also functions as a membrane androgen receptor that mediates, through a G protein, the non-classical androgen signaling pathway, characterized by the activation of MAPK3/MAPK1 (Erk1/2) and transcription factors CREB1 or ATF1. This pathway contributes to CLDN1 and CLDN5 expression and tight junction formation between adjacent Sertoli cells. Mediates androgen-induced vascular endothelial cell proliferation through activation of an inhibitory G protein leading to the AKT1 and MAPK3/MAPK1 (Erk1/2) activation which in turn modulate inhibition (phosphorylation) of GSK3B and CCND1 transcription. Moreover, has dual functions as a membrane-bound androgen receptor and as an androgen-dependent zinc transporter both of which are mediated through an inhibitory G protein (Gi) that mediates both MAP kinase and zinc signaling leading to the androgen-dependent apoptotic process. In Rattus norvegicus (Rat), this protein is Zinc transporter ZIP9.